A 327-amino-acid chain; its full sequence is Aquaporin-1 (327 aa).

The interval Met-1–Lys-34 is disordered. At Met-1 to His-48 the chain is on the cytoplasmic side. The helical transmembrane segment at Phe-49 to Ile-69 threads the bilayer. At Cys-70–Leu-91 the chain is on the extracellular side. Residues Ile-92–Val-112 form a helical membrane-spanning segment. Residues Ser-113 to Cys-136 lie on the Cytoplasmic side of the membrane. The short motif at Asn-118–Ala-120 is the NPA 1 element. A helical membrane pass occupies residues Val-137 to Met-157. Over Thr-158–Arg-176 the chain is Extracellular. A helical membrane pass occupies residues Gly-177–Val-197. Residues Glu-198–Asn-203 are Cytoplasmic-facing. The chain crosses the membrane as a helical span at residues Phe-204 to Tyr-224. Topologically, residues Thr-225 to His-248 are extracellular. The NPA 2 motif lies at Asn-230–Ala-232. Residues Trp-249–Leu-269 form a helical membrane-spanning segment. The Cytoplasmic portion of the chain corresponds to Gln-270–Asn-327.

Belongs to the MIP/aquaporin (TC 1.A.8) family.

It localises to the endoplasmic reticulum membrane. The protein localises to the cell membrane. In terms of biological role, water channel required to facilitate the transport of water across membranes. Involved in sporulation, freeze tolerance and osmotolerance. Is non-functional in most laboratory strains. The polypeptide is Aquaporin-1 (AQY1) (Saccharomyces cerevisiae (Baker's yeast)).